Reading from the N-terminus, the 1517-residue chain is Neurite extension and migration factor (1517 aa).

Positions 381–405 (DKKKGKEEVHEDKSIEKKDEKDNGE) are enriched in basic and acidic residues. Disordered regions lie at residues 381-416 (DKKK…PCSG), 505-529 (VNER…PKKR), 644-697 (SMEA…GLIG), 732-775 (KKIK…HMSE), 1065-1084 (RHSS…SPQS), 1161-1228 (DEPA…KKGK), and 1372-1422 (AGTP…SSED). Polar residues predominate over residues 644-663 (SMEASASSKQVSFGSDQKQA). The span at 678-687 (SALLAAPSSA) shows a compositional bias: low complexity. Polar residues predominate over residues 764 to 773 (TPGTSNSSHM).

The protein resides in the nucleus. It localises to the cytoplasm. Involved in neurite outgrowth by regulating cell-cell adhesion via the N-cadherin signaling pathway. May act by regulating expression of protein-coding genes, such as N-cadherins and integrin beta-1 (ITGB1). This Rattus norvegicus (Rat) protein is Neurite extension and migration factor.